A 134-amino-acid polypeptide reads, in one-letter code: Protein NrdI (134 aa).

It belongs to the NrdI family.

In terms of biological role, probably involved in ribonucleotide reductase function. The sequence is that of Protein NrdI from Rhizobium leguminosarum bv. trifolii (strain WSM2304).